Consider the following 531-residue polypeptide: MLSKTSLLSLLSLAAGVVNADFGITTNDDSYVINANSPNSLVFTVDRGSCDITSIVHYGTELQYSGKGSHIGSGLGTATVSATKSGDYIKVTCETDTLTQYMVVHDGDPIIHMATYITEEPSIGELRFIARLNSDVLPNEEPFGDVSNTADGEAIEGSDVFLVDGETRSKFYSSQRFIDDQRHCIAGDEHRVCMILNQYETSSGGPFHRDINSNNGGDYNSLYWYMNSGHVQLESYRMGLHGPYSMYFSRSGTPSTDIDTSFFADLDIEGYVAESGRGTVSGTASGADSSFDWVVHWYNDDAQYWTYTSSSGSFTSPAMKPGTYTMVYYQGEYVVATSEVTVSAGSSTSKDISGSVETGTTIFKIGDWDGQPTGFRNAENQLRMHPSDSRMSDWGPLTYTVGSSSLTDFPMAIFKSVNSPVTIKFTATSDQTGAATLRIGTTLSFAGGRPQATINDYEGSAPSAPTNLDSRGVTRGAYRGYGDVYDVSVPEGTIVEGENTITISVISGSSGDDFLSPNFLDAVFIIALVDN.

The N-terminal stretch at 1–20 is a signal peptide; sequence MLSKTSLLSLLSLAAGVVNA. 2 disulfide bridges follow: Cys50-Cys93 and Cys184-Cys193.

The protein belongs to the polysaccharide lyase 4 family.

It is found in the secreted. The catalysed reaction is Endotype eliminative cleavage of L-alpha-rhamnopyranosyl-(1-&gt;4)-alpha-D-galactopyranosyluronic acid bonds of rhamnogalacturonan I domains in ramified hairy regions of pectin leaving L-rhamnopyranose at the reducing end and 4-deoxy-4,5-unsaturated D-galactopyranosyluronic acid at the non-reducing end.. Pectinolytic enzymes consist of four classes of enzymes: pectin lyase, polygalacturonase, pectin methylesterase and rhamnogalacturonase. Degrades the rhamnogalacturonan I (RG-I) backbone of pectin. In Aspergillus niger (strain ATCC MYA-4892 / CBS 513.88 / FGSC A1513), this protein is Probable rhamnogalacturonate lyase A (rglA).